Consider the following 131-residue polypeptide: Fumarate reductase subunit C (131 aa).

A run of 3 helical transmembrane segments spans residues Glu-30–Leu-50, Ala-58–Ile-78, and Ile-109–Leu-129.

This sequence belongs to the FrdC family. In terms of assembly, part of an enzyme complex containing four subunits: a flavoprotein (FrdA), an iron-sulfur protein (FrdB), and two hydrophobic anchor proteins (FrdC and FrdD).

It localises to the cell inner membrane. In terms of biological role, two distinct, membrane-bound, FAD-containing enzymes are responsible for the catalysis of fumarate and succinate interconversion; fumarate reductase is used in anaerobic growth, and succinate dehydrogenase is used in aerobic growth. Anchors the catalytic components of the fumarate reductase complex to the cell inner membrane, binds quinones. In Proteus mirabilis (strain HI4320), this protein is Fumarate reductase subunit C.